The primary structure comprises 605 residues: Elongation factor 4 (605 aa).

Positions 11 to 193 (KNIRNFSIIA…TLVDVIPAPT (183 aa)) constitute a tr-type G domain. GTP-binding positions include 23 to 28 (DHGKST) and 140 to 143 (NKID).

This sequence belongs to the TRAFAC class translation factor GTPase superfamily. Classic translation factor GTPase family. LepA subfamily.

It localises to the cell inner membrane. It catalyses the reaction GTP + H2O = GDP + phosphate + H(+). In terms of biological role, required for accurate and efficient protein synthesis under certain stress conditions. May act as a fidelity factor of the translation reaction, by catalyzing a one-codon backward translocation of tRNAs on improperly translocated ribosomes. Back-translocation proceeds from a post-translocation (POST) complex to a pre-translocation (PRE) complex, thus giving elongation factor G a second chance to translocate the tRNAs correctly. Binds to ribosomes in a GTP-dependent manner. This Acinetobacter baumannii (strain SDF) protein is Elongation factor 4.